The chain runs to 393 residues: Chalcone synthase 1 (393 aa).

Cys166 is an active-site residue.

It belongs to the thiolase-like superfamily. Chalcone/stilbene synthases family.

The enzyme catalyses (E)-4-coumaroyl-CoA + 3 malonyl-CoA + 3 H(+) = 2',4,4',6'-tetrahydroxychalcone + 3 CO2 + 4 CoA. It participates in secondary metabolite biosynthesis; flavonoid biosynthesis. The primary product of this enzyme is 4,2',4',6'-tetrahydroxychalcone (also termed naringenin-chalcone or chalcone) which can under specific conditions spontaneously isomerize into naringenin. This Ruta graveolens (Common rue) protein is Chalcone synthase 1 (CHS1).